The primary structure comprises 247 residues: MQYNFKVEAFEGPLDLLLHLIHRYEIDIYNIPVADITEQYLSYVHTMKELQLDVASEYLVMAATLLQIKSKMLLPKHEEDVLDNGDDFIDDPRQELMERLIEYKKYKQVATELKEREQERAQLYTRPPIDFTSLQQEEETSLPLDVTLYDMLAAFQKLMRRKKAKKPVTTRITRQEIPIEQRMTDILKQLKIKGGRQSFYDLFVDDEREIMVVTFLAVLELMKNQQIIIEQEHNFDEIFVSSSNKSA.

Belongs to the ScpA family. Component of a cohesin-like complex composed of ScpA, ScpB and the Smc homodimer, in which ScpA and ScpB bind to the head domain of Smc. The presence of the three proteins is required for the association of the complex with DNA.

Its subcellular location is the cytoplasm. Functionally, participates in chromosomal partition during cell division. May act via the formation of a condensin-like complex containing Smc and ScpB that pull DNA away from mid-cell into both cell halves. This chain is Segregation and condensation protein A, found in Bacillus cereus (strain G9842).